The chain runs to 316 residues: tRNA uridine(34) hydroxylase (316 aa).

The region spanning A136–S230 is the Rhodanese domain. C190 functions as the Cysteine persulfide intermediate in the catalytic mechanism.

Belongs to the TrhO family.

It catalyses the reaction uridine(34) in tRNA + AH2 + O2 = 5-hydroxyuridine(34) in tRNA + A + H2O. Catalyzes oxygen-dependent 5-hydroxyuridine (ho5U) modification at position 34 in tRNAs. The polypeptide is tRNA uridine(34) hydroxylase (Brucella abortus (strain 2308)).